A 763-amino-acid polypeptide reads, in one-letter code: Serine/threonine-protein kinase PknG (763 aa).

Residues Met-1–Gln-32 form a disordered region. The Protein kinase domain occupies Tyr-160–Met-406. ATP contacts are provided by residues Ile-166–Val-174 and Lys-190. The active-site Proton acceptor is the Asp-289.

The protein belongs to the protein kinase superfamily. Ser/Thr protein kinase family. In terms of processing, autophosphorylated.

The catalysed reaction is L-seryl-[protein] + ATP = O-phospho-L-seryl-[protein] + ADP + H(+). The enzyme catalyses L-threonyl-[protein] + ATP = O-phospho-L-threonyl-[protein] + ADP + H(+). This is Serine/threonine-protein kinase PknG (pknG) from Mycobacterium leprae (strain TN).